A 224-amino-acid chain; its full sequence is uncharacterized protein (224 aa).

Transmembrane regions (helical) follow at residues 39–59, 70–90, 103–123, and 139–159; these read LICL…FYSI, YLSL…ILFA, VFVF…IGAI, and MHIG…FLIT.

The protein localises to the membrane. This is an uncharacterized protein from Dictyostelium discoideum (Social amoeba).